The chain runs to 247 residues: Geranylgeranylglyceryl phosphate synthase (247 aa).

Mg(2+) is bound by residues aspartate 23 and serine 52. Sn-glycerol 1-phosphate contacts are provided by residues 171 to 177 (YLEAGSG), 203 to 204 (GG), and 225 to 226 (GT).

Belongs to the GGGP/HepGP synthase family. Group II subfamily. Mg(2+) serves as cofactor.

It is found in the cytoplasm. The catalysed reaction is sn-glycerol 1-phosphate + (2E,6E,10E)-geranylgeranyl diphosphate = sn-3-O-(geranylgeranyl)glycerol 1-phosphate + diphosphate. Its pathway is membrane lipid metabolism; glycerophospholipid metabolism. Functionally, prenyltransferase that catalyzes the transfer of the geranylgeranyl moiety of geranylgeranyl diphosphate (GGPP) to the C3 hydroxyl of sn-glycerol-1-phosphate (G1P). This reaction is the first ether-bond-formation step in the biosynthesis of archaeal membrane lipids. The sequence is that of Geranylgeranylglyceryl phosphate synthase from Methanosarcina mazei (strain ATCC BAA-159 / DSM 3647 / Goe1 / Go1 / JCM 11833 / OCM 88) (Methanosarcina frisia).